Consider the following 156-residue polypeptide: Crossover junction endodeoxyribonuclease RuvC (156 aa).

Active-site residues include Asp7, Glu66, and Asp138. Mg(2+)-binding residues include Asp7, Glu66, and Asp138.

It belongs to the RuvC family. Homodimer which binds Holliday junction (HJ) DNA. The HJ becomes 2-fold symmetrical on binding to RuvC with unstacked arms; it has a different conformation from HJ DNA in complex with RuvA. In the full resolvosome a probable DNA-RuvA(4)-RuvB(12)-RuvC(2) complex forms which resolves the HJ. The cofactor is Mg(2+).

The protein resides in the cytoplasm. The catalysed reaction is Endonucleolytic cleavage at a junction such as a reciprocal single-stranded crossover between two homologous DNA duplexes (Holliday junction).. Its function is as follows. The RuvA-RuvB-RuvC complex processes Holliday junction (HJ) DNA during genetic recombination and DNA repair. Endonuclease that resolves HJ intermediates. Cleaves cruciform DNA by making single-stranded nicks across the HJ at symmetrical positions within the homologous arms, yielding a 5'-phosphate and a 3'-hydroxyl group; requires a central core of homology in the junction. The consensus cleavage sequence is 5'-(A/T)TT(C/G)-3'. Cleavage occurs on the 3'-side of the TT dinucleotide at the point of strand exchange. HJ branch migration catalyzed by RuvA-RuvB allows RuvC to scan DNA until it finds its consensus sequence, where it cleaves and resolves the cruciform DNA. The sequence is that of Crossover junction endodeoxyribonuclease RuvC from Ehrlichia chaffeensis (strain ATCC CRL-10679 / Arkansas).